The primary structure comprises 429 residues: Glucose-6-phosphate isomerase (429 aa).

Glu282 (proton donor) is an active-site residue. Active-site residues include His303 and Lys418.

This sequence belongs to the GPI family.

The protein resides in the cytoplasm. It carries out the reaction alpha-D-glucose 6-phosphate = beta-D-fructose 6-phosphate. Its pathway is carbohydrate biosynthesis; gluconeogenesis. The protein operates within carbohydrate degradation; glycolysis; D-glyceraldehyde 3-phosphate and glycerone phosphate from D-glucose: step 2/4. Its function is as follows. Catalyzes the reversible isomerization of glucose-6-phosphate to fructose-6-phosphate. The polypeptide is Glucose-6-phosphate isomerase (Mesomycoplasma hyopneumoniae (strain J / ATCC 25934 / NCTC 10110) (Mycoplasma hyopneumoniae)).